Consider the following 832-residue polypeptide: WD repeat-containing protein 75 (832 aa).

WD repeat units follow at residues 4 to 43 (QCQI…KVYS), 47 to 86 (EECI…KLWD), 90 to 131 (GILI…QLVS), 145 to 184 (KEIS…YYFK), 193 to 230 (LKAT…RLWR), 236 to 275 (KEYT…VQWP), 278 to 317 (SEEK…SIID), 323 to 361 (SGII…QFYS), 375 to 424 (QQEF…KLWE), 431 to 477 (SFVL…KVWM), 490 to 528 (SWLC…TVWE), 532 to 572 (WDLK…CCWN), and 577 to 614 (ALEW…FLFQ). The tract at residues 764-798 (SQSTEESKEDEEMKSEHSEADSSDETEEMESQKRF) is disordered.

Component of the proposed t-UTP subcomplex of the ribosomal small subunit (SSU) processome. SSU processome is composed of more than 70 proteins and the RNA chaperone small nucleolar RNA (snoRNA) U3.

Its subcellular location is the nucleus. The protein localises to the nucleolus. In terms of biological role, ribosome biogenesis factor. Part of the small subunit (SSU) processome, first precursor of the small eukaryotic ribosomal subunit. During the assembly of the SSU processome in the nucleolus, many ribosome biogenesis factors, an RNA chaperone and ribosomal proteins associate with the nascent pre-rRNA and work in concert to generate RNA folding, modifications, rearrangements and cleavage as well as targeted degradation of pre-ribosomal RNA by the RNA exosome. Involved in nucleolar processing of pre-18S ribosomal RNA. Required for optimal pre-ribosomal RNA transcription by RNA polymerase I. In Xenopus laevis (African clawed frog), this protein is WD repeat-containing protein 75 (wdr75).